The primary structure comprises 633 residues: Transcriptional repressor p66-alpha (633 aa).

The span at 1–18 (MTEEACRTRSQKRALERD) shows a compositional bias: basic and acidic residues. Disordered stretches follow at residues 1–59 (MTEE…PTQG) and 73–119 (RGEG…RVNG). Residues Thr20 and Thr49 each carry the phosphothreonine modification. The span at 86-99 (RTSHSDMKSERRPP) shows a compositional bias: basic and acidic residues. A Glycyl lysine isopeptide (Lys-Gly) (interchain with G-Cter in SUMO2) cross-link involves residue Lys93. A phosphoserine mark is found at Ser100, Ser107, Ser113, Ser114, and Ser137. Over residues 108–119 (DNEQPSSPRVNG) the composition is skewed to polar residues. Positions 139 to 174 (EERERMIKQLKEELRLEEAKLVLLKKLRQSQIQKEA) form a coiled coil. The segment at 144–178 (MIKQLKEELRLEEAKLVLLKKLRQSQIQKEATAQK) is CR1; interaction with HDAC1, HDAC2, MBD2 and MTA2. A compositionally biased stretch (polar residues) spans 172 to 188 (KEATAQKPTGSVGSTVT). The disordered stretch occupies residues 172–238 (KEATAQKPTG…QASSKLGPQA (67 aa)). Lys178 participates in a covalent cross-link: Glycyl lysine isopeptide (Lys-Gly) (interchain with G-Cter in SUMO2). The interaction with ZMYND8 stretch occupies residues 181–295 (GSVGSTVTTP…IIQQGLIRVA (115 aa)). Thr189 carries the post-translational modification Phosphothreonine. The span at 196–212 (GTQNIPAGKPSLQTSSA) shows a compositional bias: polar residues. Lys204 is covalently cross-linked (Glycyl lysine isopeptide (Lys-Gly) (interchain with G-Cter in SUMO2)). Arg225 carries the post-translational modification Omega-N-methylarginine. Residues 228–238 (QQASSKLGPQA) show a composition bias toward polar residues. Lys233 participates in a covalent cross-link: Glycyl lysine isopeptide (Lys-Gly) (interchain with G-Cter in SUMO2). An omega-N-methylarginine mark is found at Arg249, Arg258, and Arg273. Ser275 carries the post-translational modification Phosphoserine. Arg285 bears the Omega-N-methylarginine mark. A phosphoserine mark is found at Ser340 and Ser343. The interval 340-480 (SPASRQAAAK…EIEQRLLQQG (141 aa)) is CR2; histone tail-binding and interaction with CHD4 and CDK2AP1. The segment at 411–464 (SREPYMCAQCKTDFTCRWREEKSGAIMCENCMTTNQKKALKVEHTSRLKAAFVK) adopts a GATA-type zinc-finger fold. Residues Lys464 and Lys487 each participate in a glycyl lysine isopeptide (Lys-Gly) (interchain with G-Cter in SUMO2) cross-link. Ser512 is modified (phosphoserine). Arg539 is modified (asymmetric dimethylarginine; alternate). Residue Arg539 is modified to Omega-N-methylarginine; alternate. Ser546 and Ser548 each carry phosphoserine. Lys550 is covalently cross-linked (Glycyl lysine isopeptide (Lys-Gly) (interchain with G-Cter in SUMO2)). Residue Ser556 is modified to Phosphoserine. Residues 561-585 (VSRTGRHSERTVSAGKGSATSNWKK) are disordered. Residue Lys585 forms a Glycyl lysine isopeptide (Lys-Gly) (interchain with G-Cter in SUMO2) linkage. Ser598 is subject to Phosphoserine. A Glycyl lysine isopeptide (Lys-Gly) (interchain with G-Cter in SUMO2) cross-link involves residue Lys605.

As to quaternary structure, homooligomer. Component of the nucleosome remodeling and deacetylase (NuRD) repressor complex, composed of core proteins MTA1, MTA2, MTA3, RBBP4, RBBP7, HDAC1, HDAC2, MBD2, MBD3, and peripherally associated proteins CDK2AP1, CDK2AP2, GATAD2A, GATAD2B, CHD3, CHD4 and CHD5. The exact stoichiometry of the NuRD complex is unknown, and some subunits such as MBD2 and MBD3, GATAD2A and GATAD2B, and CHD3, CHD4 and CHD5 define mutually exclusive NuRD complexes. Component of the MeCP1 histone deacetylase complex. Interacts with CDK2AP1. Interacts with CHD4. Interacts with ERCC6. Interacts with HDAC1. Interacts with HDAC2. Interacts with MBD2; this interaction is required for the enhancement of MBD2-mediated repression and for targeting to the chromatin. Interacts with MBD3. Interacts with MTA2. Interacts with ZMYND8. Interacts with histone tails, including that of histones H2A, H2B, H3 and H4, the interaction is reduced by histone acetylation. Ubiquitous, both in fetal and adult tissues.

Its subcellular location is the nucleus speckle. The protein localises to the nucleus. It localises to the chromosome. Functionally, transcriptional repressor. Acts as a component of the histone deacetylase NuRD complex which participates in the remodeling of chromatin. Enhances MBD2-mediated repression. Efficient repression requires the presence of GATAD2B. The chain is Transcriptional repressor p66-alpha (GATAD2A) from Homo sapiens (Human).